Reading from the N-terminus, the 347-residue chain is NADH-ubiquinone oxidoreductase chain 2 (347 aa).

Transmembrane regions (helical) follow at residues 1–21, 25–45, 59–79, 96–116, 122–142, 149–169, 178–198, 200–220, 237–257, 274–294, and 325–345; these read MNPL…MMVV, HWLL…PIMM, YLLT…INLM, TLMT…FWVP, IPLT…LSIL, INLH…GWGG, IMAY…LYNP, LTLL…MLFI, MPVI…LPPL, DMLI…YFYM, and LLPT…MLSI.

It belongs to the complex I subunit 2 family. As to quaternary structure, core subunit of respiratory chain NADH dehydrogenase (Complex I) which is composed of 45 different subunits. Interacts with TMEM242.

It localises to the mitochondrion inner membrane. The enzyme catalyses a ubiquinone + NADH + 5 H(+)(in) = a ubiquinol + NAD(+) + 4 H(+)(out). Core subunit of the mitochondrial membrane respiratory chain NADH dehydrogenase (Complex I) which catalyzes electron transfer from NADH through the respiratory chain, using ubiquinone as an electron acceptor. Essential for the catalytic activity and assembly of complex I. This Balaenoptera physalus (Fin whale) protein is NADH-ubiquinone oxidoreductase chain 2.